The chain runs to 502 residues: ATP synthase subunit alpha (502 aa).

169 to 176 (GDRQTGKT) is a binding site for ATP.

The protein belongs to the ATPase alpha/beta chains family. F-type ATPases have 2 components, CF(1) - the catalytic core - and CF(0) - the membrane proton channel. CF(1) has five subunits: alpha(3), beta(3), gamma(1), delta(1), epsilon(1). CF(0) has three main subunits: a(1), b(2) and c(9-12). The alpha and beta chains form an alternating ring which encloses part of the gamma chain. CF(1) is attached to CF(0) by a central stalk formed by the gamma and epsilon chains, while a peripheral stalk is formed by the delta and b chains.

Its subcellular location is the cell inner membrane. It catalyses the reaction ATP + H2O + 4 H(+)(in) = ADP + phosphate + 5 H(+)(out). In terms of biological role, produces ATP from ADP in the presence of a proton gradient across the membrane. The alpha chain is a regulatory subunit. The chain is ATP synthase subunit alpha from Oleidesulfovibrio alaskensis (strain ATCC BAA-1058 / DSM 17464 / G20) (Desulfovibrio alaskensis).